Consider the following 715-residue polypeptide: Fatty acid oxidation complex subunit alpha (715 aa).

Positions 1-190 (MIYQGKAITV…KVGAVDAVVA (190 aa)) are enoyl-CoA hydratase/isomerase. Residue aspartate 297 coordinates substrate. The tract at residues 312–715 (KDVKLAAVLG…MAKNGQKFFG (404 aa)) is 3-hydroxyacyl-CoA dehydrogenase. NAD(+) contacts are provided by residues methionine 325, aspartate 344, 401–403 (VVE), lysine 408, and serine 430. Catalysis depends on histidine 451, which acts as the For 3-hydroxyacyl-CoA dehydrogenase activity. Asparagine 454 contributes to the NAD(+) binding site. Residues asparagine 501 and tyrosine 660 each contribute to the substrate site.

In the N-terminal section; belongs to the enoyl-CoA hydratase/isomerase family. The protein in the C-terminal section; belongs to the 3-hydroxyacyl-CoA dehydrogenase family. As to quaternary structure, heterotetramer of two alpha chains (FadB) and two beta chains (FadA).

It carries out the reaction a (3S)-3-hydroxyacyl-CoA + NAD(+) = a 3-oxoacyl-CoA + NADH + H(+). It catalyses the reaction a (3S)-3-hydroxyacyl-CoA = a (2E)-enoyl-CoA + H2O. The catalysed reaction is a 4-saturated-(3S)-3-hydroxyacyl-CoA = a (3E)-enoyl-CoA + H2O. The enzyme catalyses (3S)-3-hydroxybutanoyl-CoA = (3R)-3-hydroxybutanoyl-CoA. It carries out the reaction a (3Z)-enoyl-CoA = a 4-saturated (2E)-enoyl-CoA. It catalyses the reaction a (3E)-enoyl-CoA = a 4-saturated (2E)-enoyl-CoA. It functions in the pathway lipid metabolism; fatty acid beta-oxidation. Functionally, involved in the aerobic and anaerobic degradation of long-chain fatty acids via beta-oxidation cycle. Catalyzes the formation of 3-oxoacyl-CoA from enoyl-CoA via L-3-hydroxyacyl-CoA. It can also use D-3-hydroxyacyl-CoA and cis-3-enoyl-CoA as substrate. This Pseudomonas paraeruginosa (strain DSM 24068 / PA7) (Pseudomonas aeruginosa (strain PA7)) protein is Fatty acid oxidation complex subunit alpha.